The following is a 38-amino-acid chain: Large ribosomal subunit protein bL36 (38 aa).

Belongs to the bacterial ribosomal protein bL36 family.

In Stutzerimonas stutzeri (strain A1501) (Pseudomonas stutzeri), this protein is Large ribosomal subunit protein bL36.